Here is a 493-residue protein sequence, read N- to C-terminus: Glycerol kinase (493 aa).

Thr11 is an ADP binding site. ATP contacts are provided by Thr11, Thr12, and Ser13. Residue Thr11 coordinates sn-glycerol 3-phosphate. Arg15 is a binding site for ADP. Sn-glycerol 3-phosphate-binding residues include Arg80, Glu81, Tyr132, and Asp241. The glycerol site is built by Arg80, Glu81, Tyr132, Asp241, and Gln242. ADP is bound by residues Thr263 and Gly306. Residues Thr263, Gly306, Gln310, and Gly408 each contribute to the ATP site. Position 408 (Gly408) interacts with ADP.

Belongs to the FGGY kinase family.

It carries out the reaction glycerol + ATP = sn-glycerol 3-phosphate + ADP + H(+). It functions in the pathway polyol metabolism; glycerol degradation via glycerol kinase pathway; sn-glycerol 3-phosphate from glycerol: step 1/1. With respect to regulation, inhibited by fructose 1,6-bisphosphate (FBP). Key enzyme in the regulation of glycerol uptake and metabolism. Catalyzes the phosphorylation of glycerol to yield sn-glycerol 3-phosphate. The protein is Glycerol kinase of Cereibacter sphaeroides (strain ATCC 17023 / DSM 158 / JCM 6121 / CCUG 31486 / LMG 2827 / NBRC 12203 / NCIMB 8253 / ATH 2.4.1.) (Rhodobacter sphaeroides).